The primary structure comprises 243 residues: 1-(5-phosphoribosyl)-5-[(5-phosphoribosylamino)methylideneamino] imidazole-4-carboxamide isomerase (243 aa).

Aspartate 8 functions as the Proton acceptor in the catalytic mechanism. The active-site Proton donor is the aspartate 129.

The protein belongs to the HisA/HisF family.

It is found in the cytoplasm. The catalysed reaction is 1-(5-phospho-beta-D-ribosyl)-5-[(5-phospho-beta-D-ribosylamino)methylideneamino]imidazole-4-carboxamide = 5-[(5-phospho-1-deoxy-D-ribulos-1-ylimino)methylamino]-1-(5-phospho-beta-D-ribosyl)imidazole-4-carboxamide. The protein operates within amino-acid biosynthesis; L-histidine biosynthesis; L-histidine from 5-phospho-alpha-D-ribose 1-diphosphate: step 4/9. This is 1-(5-phosphoribosyl)-5-[(5-phosphoribosylamino)methylideneamino] imidazole-4-carboxamide isomerase from Carboxydothermus hydrogenoformans (strain ATCC BAA-161 / DSM 6008 / Z-2901).